A 330-amino-acid polypeptide reads, in one-letter code: Molybdate/tungstate import ATP-binding protein WtpC (330 aa).

One can recognise an ABC transporter domain in the interval 3–232; it reads LMVEGISKDY…PASEEVAKFL (230 aa). 34–41 provides a ligand contact to ATP; that stretch reads GPSGAGKT.

This sequence belongs to the ABC transporter superfamily. Sulfate/tungstate importer (TC 3.A.1.6) family. The complex is composed of two ATP-binding proteins (WtpC), two transmembrane proteins (WtpB) and a solute-binding protein (WtpA).

The protein resides in the cell membrane. It catalyses the reaction tungstate(in) + ATP + H2O = tungstate(out) + ADP + phosphate + H(+). Its function is as follows. Part of the ABC transporter complex WtpABC involved in molybdate/tungstate import. Responsible for energy coupling to the transport system. This chain is Molybdate/tungstate import ATP-binding protein WtpC (wtpC), found in Thermococcus kodakarensis (strain ATCC BAA-918 / JCM 12380 / KOD1) (Pyrococcus kodakaraensis (strain KOD1)).